The sequence spans 542 residues: Ribonuclease Y (542 aa).

The chain crosses the membrane as a helical span at residues 1–21; that stretch reads MLIALIAVSVLAVAAIIGSLA. The disordered stretch occupies residues 52-92; the sequence is SRASQDLADSRKDVAKARAELESSRTRASDEARRADNADQA. Over residues 59 to 92 the composition is skewed to basic and acidic residues; it reads ADSRKDVAKARAELESSRTRASDEARRADNADQA. A KH domain is found at 229 to 289; that stretch reads VVSVVPLPSN…MRREVARQAL (61 aa). The HD domain occupies 355 to 449; sequence VLDHCVECAR…VKAADAISAA (95 aa).

The protein belongs to the RNase Y family.

The protein localises to the cell membrane. In terms of biological role, endoribonuclease that initiates mRNA decay. This chain is Ribonuclease Y, found in Cutibacterium acnes (strain DSM 16379 / KPA171202) (Propionibacterium acnes).